Consider the following 441-residue polypeptide: Zinc finger and BTB domain-containing protein 8A (441 aa).

The 69-residue stretch at 24-92 (CDCSILVEGK…VYSGKLSLTG (69 aa)) folds into the BTB domain. Composition is skewed to polar residues over residues 146 to 170 (ERSS…SPDQ) and 178 to 197 (KSWS…QQPL). Positions 146–252 (ERSSFYSSGW…SEEQAQMNAE (107 aa)) are disordered. Residues S161 and S167 each carry the phosphoserine modification. Glycyl lysine isopeptide (Lys-Gly) (interchain with G-Cter in SUMO2) cross-links involve residues K178, K182, and K199. Over residues 198–208 (TKHEQRKDSIK) the composition is skewed to basic and acidic residues. Residues 234-248 (SDSSSHASQSEEQAQ) are compositionally biased toward low complexity. 2 consecutive C2H2-type zinc fingers follow at residues 282 to 304 (FKCP…LRCH) and 310 to 333 (YPCQ…RTIH). Residue K437 forms a Glycyl lysine isopeptide (Lys-Gly) (interchain with G-Cter in SUMO2) linkage.

It is found in the nucleus. In terms of biological role, may be involved in transcriptional regulation. This is Zinc finger and BTB domain-containing protein 8A (ZBTB8A) from Bos taurus (Bovine).